The sequence spans 225 residues: Heptaprenylglyceryl phosphate synthase (225 aa).

Lys6 lines the sn-glycerol 1-phosphate pocket. Mg(2+)-binding residues include Asp8 and Thr34. Residues 153 to 158 (YVEYSG), Gly183, and 203 to 204 (GN) contribute to the sn-glycerol 1-phosphate site.

The protein belongs to the GGGP/HepGP synthase family. Group I subfamily. In terms of assembly, homodimer. It depends on Mg(2+) as a cofactor.

It carries out the reaction sn-glycerol 1-phosphate + all-trans-heptaprenyl diphosphate = 3-heptaprenyl-sn-glycero-1-phosphate + diphosphate. Its pathway is membrane lipid metabolism; glycerophospholipid metabolism. Functionally, prenyltransferase that catalyzes in vivo the transfer of the heptaprenyl moiety of heptaprenyl pyrophosphate (HepPP; 35 carbon atoms) to the C3 hydroxyl of sn-glycerol-1-phosphate (G1P), producing heptaprenylglyceryl phosphate (HepGP). This reaction is an ether-bond-formation step in the biosynthesis of archaea-type G1P-based membrane lipids found in Bacillales. The sequence is that of Heptaprenylglyceryl phosphate synthase from Listeria monocytogenes serotype 4b (strain CLIP80459).